A 512-amino-acid polypeptide reads, in one-letter code: Allene oxide synthase 1, chloroplastic (512 aa).

Residues 1–25 (MATAAACISFASPSPARVVIRRQTR) constitute a chloroplast transit peptide. Positions 23–43 (QTRASASASATDRQEVVSPKR) are disordered. Residues K127, H158, and K162 each contribute to the heme b site. N315 contacts (13S)-hydroperoxy-(9Z,11E,15Z)-octadecatrienoate. Heme b-binding residues include K463 and C465.

This sequence belongs to the cytochrome P450 family. The cofactor is heme b. In terms of tissue distribution, expressed in coleoptiles, and at lower level in leaves of dark-grown seedlings.

The protein localises to the plastid. The protein resides in the chloroplast membrane. It catalyses the reaction (13S)-hydroperoxy-(9Z,11E,15Z)-octadecatrienoate = (9Z,13S,15Z)-12,13-epoxyoctadeca-9,11,15-trienoate + H2O. It participates in lipid metabolism; oxylipin biosynthesis. Its function is as follows. Involved in the biosynthesis of jasmonic acid, a growth regulator that is implicated also as a signaling molecule in plant defense. Converts 13-hydroperoxylinolenic acid to 12,13-epoxylinolenic acid. This chain is Allene oxide synthase 1, chloroplastic (CYP74A1), found in Oryza sativa subsp. japonica (Rice).